Reading from the N-terminus, the 506-residue chain is Protein NEN3 (506 aa).

The region spanning 15–176 (FFDLETAVPT…LDDVRMNLEV (162 aa)) is the Exonuclease domain. 2 residues coordinate Mg(2+): D17 and E19. Catalysis depends on H164, which acts as the Proton donor/acceptor. D169 serves as a coordination point for Mg(2+). Disordered regions lie at residues 204–240 (KSPR…SSVD) and 289–313 (AEEA…KDES). A compositionally biased stretch (low complexity) spans 222–238 (SSTSSSSSPKTDPSSSS). The segment covering 290 to 299 (EEAKTVRQQD) has biased composition (basic and acidic residues).

Mg(2+) serves as cofactor.

Probable exonuclease that may be involved in enuclation of sieve elements. The polypeptide is Protein NEN3 (NEN3) (Arabidopsis thaliana (Mouse-ear cress)).